Reading from the N-terminus, the 226-residue chain is Ribose-5-phosphate isomerase A (226 aa).

Residues T33–T36, D86–D89, and K99–G102 contribute to the substrate site. The active-site Proton acceptor is the E108. K126 provides a ligand contact to substrate.

Belongs to the ribose 5-phosphate isomerase family. As to quaternary structure, homodimer.

It catalyses the reaction aldehydo-D-ribose 5-phosphate = D-ribulose 5-phosphate. It participates in carbohydrate degradation; pentose phosphate pathway; D-ribose 5-phosphate from D-ribulose 5-phosphate (non-oxidative stage): step 1/1. Its function is as follows. Catalyzes the reversible conversion of ribose-5-phosphate to ribulose 5-phosphate. This chain is Ribose-5-phosphate isomerase A, found in Bordetella parapertussis (strain 12822 / ATCC BAA-587 / NCTC 13253).